The following is a 314-amino-acid chain: Olfactory receptor 9I1 (314 aa).

Residues 1–25 (MAKNNLTRVTEFILMGFMDHPKLEI) are Extracellular-facing. N-linked (GlcNAc...) asparagine glycosylation occurs at Asn5. The helical transmembrane segment at 26–46 (PLFLVFLSFYLVTLLGNVGMI) threads the bilayer. At 47-54 (MLIQVDVK) the chain is on the cytoplasmic side. Residues 55–75 (LYTPMYFFLSHLSLLDACYTS) traverse the membrane as a helical segment. At 76 to 99 (VITPQILATLATGKTVISYGHCAA) the chain is on the extracellular side. The cysteines at positions 97 and 189 are disulfide-linked. A helical transmembrane segment spans residues 100–120 (QFFLFTICAGTECFLLAVMAY). The Cytoplasmic portion of the chain corresponds to 121-139 (DRYAAIRNPLLYTVAMNPR). The helical transmembrane segment at 140–160 (LCWSLVVGAYVCGVSGAILRT) threads the bilayer. Topologically, residues 161-197 (TCTFTLSFCKDNQINFFFCDLPPLLKLACSDTANIEI) are extracellular. Residues 198 to 217 (VIIFFGNFVILANASVILIS) form a helical membrane-spanning segment. Residues 218 to 237 (YLLIIKTILKVKSSGGRAKT) are Cytoplasmic-facing. The helical transmembrane segment at 238–258 (FSTCASHITAVALFFGALIFM) threads the bilayer. Residues 259 to 271 (YLQSGSGKSLEED) are Extracellular-facing. Residues 272 to 292 (KVVSVFYTVVIPMLNPLIYSL) form a helical membrane-spanning segment. At 293–314 (RNKDVKDAFRKVARRLQVSLSM) the chain is on the cytoplasmic side.

This sequence belongs to the G-protein coupled receptor 1 family.

Its subcellular location is the cell membrane. Functionally, odorant receptor. The polypeptide is Olfactory receptor 9I1 (OR9I1) (Homo sapiens (Human)).